The chain runs to 257 residues: Paired box protein 1 homolog (257 aa).

Low complexity predominate over residues 26 to 37 (TTPSSTSTTPSS). The segment at 26–58 (TTPSSTSTTPSSDNGIQQYSSISTSSGYAPANS) is disordered. The span at 38–52 (DNGIQQYSSISTSSG) shows a compositional bias: polar residues. Residues 61-187 (KTAEVNQLGG…SSISRILRNK (127 aa)) constitute a DNA-binding region (paired). A PAI subdomain region spans residues 64 to 120 (EVNQLGGVFVNGRPLPFEMRCKIVELSRQGTRPCDISRQLKISHGCVSKILTRFSEN). The RED subdomain stretch occupies residues 139–187 (KVVEYIRSLKRSDPGIFAWEIRDRLISADICDRANLPSVSSISRILRNK).

Its subcellular location is the nucleus. In terms of biological role, transcription factor. May play a role in pharyngeal cell differentiation. May have a protective role in response to infection by the Gram-negative bacterium Vibrio cholerae. The polypeptide is Paired box protein 1 homolog (Caenorhabditis elegans).